The chain runs to 116 residues: Large ribosomal subunit protein bL17 (116 aa).

This sequence belongs to the bacterial ribosomal protein bL17 family. As to quaternary structure, part of the 50S ribosomal subunit. Contacts protein L32.

The protein is Large ribosomal subunit protein bL17 of Chloroflexus aggregans (strain MD-66 / DSM 9485).